Consider the following 185-residue polypeptide: Dual-action ribosomal maturation protein DarP (185 aa).

Belongs to the DarP family.

The protein resides in the cytoplasm. Member of a network of 50S ribosomal subunit biogenesis factors which assembles along the 30S-50S interface, preventing incorrect 23S rRNA structures from forming. Promotes peptidyl transferase center (PTC) maturation. The chain is Dual-action ribosomal maturation protein DarP from Vibrio vulnificus (strain YJ016).